Consider the following 323-residue polypeptide: Thiamine-monophosphate kinase (323 aa).

Mg(2+)-binding residues include aspartate 30, serine 45, threonine 46, and aspartate 47. Substrate is bound at residue histidine 54. The Mg(2+) site is built by aspartate 75 and aspartate 122. Residues 121–122 (GD) and arginine 146 contribute to the ATP site. Position 212 (aspartate 212) interacts with Mg(2+). An ATP-binding site is contributed by serine 214. Aspartate 215 is a binding site for Mg(2+). Substrate-binding residues include glutamate 263 and phenylalanine 319.

It belongs to the thiamine-monophosphate kinase family.

It catalyses the reaction thiamine phosphate + ATP = thiamine diphosphate + ADP. It functions in the pathway cofactor biosynthesis; thiamine diphosphate biosynthesis; thiamine diphosphate from thiamine phosphate: step 1/1. Catalyzes the ATP-dependent phosphorylation of thiamine-monophosphate (TMP) to form thiamine-pyrophosphate (TPP), the active form of vitamin B1. The polypeptide is Thiamine-monophosphate kinase (Buchnera aphidicola subsp. Acyrthosiphon pisum (strain APS) (Acyrthosiphon pisum symbiotic bacterium)).